A 299-amino-acid polypeptide reads, in one-letter code: Lathosterol oxidase (299 aa).

The next 3 helical transmembrane spans lie at 32–52 (ISLLIVTNVGAYILYFFCATL), 79–99 (FTVQALPWISILTVALFLLEI), and 117–137 (FELVVSIISFLFFTDMFIYWI). The Fatty acid hydroxylase domain maps to 124–252 (ISFLFFTDMF…YFTLWDRIGG (129 aa)). The Histidine box-1 motif lies at 138 to 143 (HRGLHH). The short motif at 151-155 (HKPHH) is the Histidine box-2 element. Residues 186–206 (IFPLHKVVYLSLYILVNIWTI) form a helical membrane-spanning segment. Positions 228–233 (HHTDHH) match the Histidine box-3 motif. The residue at position 253 (serine 253) is a Phosphoserine. Residues 274–299 (EGKRSSHSGNGCKNEKLFNGEFTKTE) form a disordered region. Basic and acidic residues predominate over residues 286 to 299 (KNEKLFNGEFTKTE).

It belongs to the sterol desaturase family. Fe cation is required as a cofactor.

It localises to the endoplasmic reticulum membrane. It catalyses the reaction a Delta(7)-sterol + 2 Fe(II)-[cytochrome b5] + O2 + 2 H(+) = a Delta(5),Delta(7)-sterol + 2 Fe(III)-[cytochrome b5] + 2 H2O. The catalysed reaction is lathosterol + 2 Fe(II)-[cytochrome b5] + O2 + 2 H(+) = 7-dehydrocholesterol + 2 Fe(III)-[cytochrome b5] + 2 H2O. The enzyme catalyses 5alpha-cholesta-7,24-dien-3beta-ol + 2 Fe(II)-[cytochrome b5] + O2 + 2 H(+) = 7-dehydrodesmosterol + 2 Fe(III)-[cytochrome b5] + 2 H2O. Its pathway is steroid biosynthesis; cholesterol biosynthesis. Functionally, catalyzes the penultimate step of the biosynthesis of cholesterol, the dehydrogenation of lathosterol into 7-dehydrocholesterol (7-DHC). Cholesterol is the major sterol component in mammalian membranes and a precursor for bile acid and steroid hormone synthesis. In addition to its essential role in cholesterol biosynthesis, it also indirectly regulates ferroptosis through the production of 7-DHC. By diverting the spread of damage caused by peroxyl radicals from the phospholipid components to its sterol nucleus, 7-DHC prevents this form of cell death. In Homo sapiens (Human), this protein is Lathosterol oxidase.